We begin with the raw amino-acid sequence, 265 residues long: Glutamate racemase (265 aa).

Substrate-binding positions include 9-10 and 41-42; these read DS and YG. C72 acts as the Proton donor/acceptor in catalysis. A substrate-binding site is contributed by 73–74; it reads NT. The active-site Proton donor/acceptor is the C183. Position 184-185 (184-185) interacts with substrate; sequence TH.

It belongs to the aspartate/glutamate racemases family.

It carries out the reaction L-glutamate = D-glutamate. It participates in cell wall biogenesis; peptidoglycan biosynthesis. Functionally, provides the (R)-glutamate required for cell wall biosynthesis. This Lysinibacillus sphaericus (strain C3-41) protein is Glutamate racemase.